The chain runs to 229 residues: Ribosome maturation factor RimM (229 aa).

The disordered stretch occupies residues 1–21 (MAGHDSGNAKRGRSPSFGVFV). Residues 148–229 (ADEFYWVDLI…RVVVDWEADY (82 aa)) form the PRC barrel domain.

It belongs to the RimM family. Binds ribosomal protein uS19.

It is found in the cytoplasm. Its function is as follows. An accessory protein needed during the final step in the assembly of 30S ribosomal subunit, possibly for assembly of the head region. Essential for efficient processing of 16S rRNA. May be needed both before and after RbfA during the maturation of 16S rRNA. It has affinity for free ribosomal 30S subunits but not for 70S ribosomes. This is Ribosome maturation factor RimM from Burkholderia pseudomallei (strain 1106a).